Consider the following 445-residue polypeptide: Cytoplasmic tRNA 2-thiolation protein 2 (445 aa).

The span at 1–11 (MCSIGEDDFGD) shows a compositional bias: acidic residues. A disordered region spans residues 1–26 (MCSIGEDDFGDEGGVHAMKEESPLPE). The span at 13–22 (GGVHAMKEES) shows a compositional bias: basic and acidic residues.

This sequence belongs to the CTU2/NCS2 family.

It localises to the cytoplasm. It functions in the pathway tRNA modification; 5-methoxycarbonylmethyl-2-thiouridine-tRNA biosynthesis. In terms of biological role, plays a central role in 2-thiolation of mcm(5)S(2)U at tRNA wobble positions of tRNA(Lys), tRNA(Glu) and tRNA(Gln). May act by forming a heterodimer with NCS6/CTU1 that ligates sulfur from thiocarboxylated URM1 onto the uridine of tRNAs at wobble position. The sequence is that of Cytoplasmic tRNA 2-thiolation protein 2 from Aedes aegypti (Yellowfever mosquito).